The sequence spans 587 residues: Protein NDNF (587 aa).

Positions 1–24 (MQRSTMLPGVELLLLFLLSTSLHA) are cleaved as a signal peptide. N-linked (GlcNAc...) asparagine glycans are attached at residues asparagine 109, asparagine 129, asparagine 190, asparagine 321, asparagine 334, asparagine 459, asparagine 498, and asparagine 558.

In terms of assembly, binds heparin. Interacts with dally; the interaction promotes dally degradation. Interacts with dpp and gbb.

It localises to the secreted. It is found in the extracellular space. The protein resides in the extracellular matrix. Its function is as follows. Secretory protein that acts as a feedback regulator of dpp/BMP, wg and hh signaling pathways. In the developing wing, is a dosage-dependent modulator of dpp/BMP signaling involved in wing growth and crossvein patterning; low levels promote and high levels inhibit dpp/BMP signaling. In the early pupal wing, inhibits dpp/BMP signaling activity to prevent the formation of ectopic crossveins in the posterior compartment. Binds to dpp and gbb to modulate their release and activity decreasing dpp/BMP signaling in the responding cells. During wing development regulates dpp/BMP coreceptor dally availability on the cell surface. Might have a role in testis development. The polypeptide is Protein NDNF (Drosophila melanogaster (Fruit fly)).